Here is a 504-residue protein sequence, read N- to C-terminus: ATP synthase subunit alpha, chloroplastic (504 aa).

Residue 170-177 coordinates ATP; that stretch reads GDRQTGKT.

This sequence belongs to the ATPase alpha/beta chains family. F-type ATPases have 2 components, CF(1) - the catalytic core - and CF(0) - the membrane proton channel. CF(1) has five subunits: alpha(3), beta(3), gamma(1), delta(1), epsilon(1). CF(0) has four main subunits: a, b, b' and c.

It localises to the plastid. The protein localises to the chloroplast thylakoid membrane. The enzyme catalyses ATP + H2O + 4 H(+)(in) = ADP + phosphate + 5 H(+)(out). Functionally, produces ATP from ADP in the presence of a proton gradient across the membrane. The alpha chain is a regulatory subunit. The chain is ATP synthase subunit alpha, chloroplastic from Ostreococcus tauri.